The sequence spans 72 residues: MQKLIILLLVAAVLMSTQALFQEKRPKEKIDLLSKRKTDAEKQQKRYCSDDSQPCSHFYDCCKWSCNNGYCP.

A signal peptide spans 1 to 19 (MQKLIILLLVAAVLMSTQA). Positions 20 to 44 (LFQEKRPKEKIDLLSKRKTDAEKQQ) are excised as a propeptide. Cystine bridges form between Cys-48/Cys-62, Cys-55/Cys-66, and Cys-61/Cys-71.

It belongs to the conotoxin O2 superfamily. As to expression, expressed by the venom duct.

The protein resides in the secreted. Its function is as follows. Inhibits voltage-gated ion channels. The sequence is that of Conotoxin Vc6.16 from Conus victoriae (Queen Victoria cone).